The primary structure comprises 608 residues: ATP-citrate synthase beta chain protein 1 (608 aa).

Residues 214-234 and 265-291 each bind ATP; these read ILRF…ELGG and FKSE…KNQA. Glutamate 231 provides a ligand contact to Mg(2+). The active-site Tele-phosphohistidine intermediate is the histidine 273. Position 292–302 (292–302) interacts with CoA; it reads LKDAGAVVPTS.

It belongs to the succinate/malate CoA ligase alpha subunit family. Heterooctamer of 4 alpha and 4 beta chains.

It is found in the cytoplasm. Its subcellular location is the cytosol. It catalyses the reaction oxaloacetate + acetyl-CoA + ADP + phosphate = citrate + ATP + CoA. In terms of biological role, ATP citrate-lyase is the primary enzyme responsible for the synthesis of cytosolic acetyl-CoA, used for the elongation of fatty acids and biosynthesis of isoprenoids, flavonoids and malonated derivatives. May supply substrate to the cytosolic acetyl-CoA carboxylase, which generates the malonyl-CoA used for the synthesis of a multitude of compounds, including very long chain fatty acids and flavonoids. In contrast to all known animal ACL enzymes having a homomeric structure, plant ACLs are composed of alpha and beta chains. The polypeptide is ATP-citrate synthase beta chain protein 1 (ACLB-1) (Oryza sativa subsp. japonica (Rice)).